A 60-amino-acid chain; its full sequence is Large ribosomal subunit protein bL33 (60 aa).

Belongs to the bacterial ribosomal protein bL33 family.

This Chlorobium phaeobacteroides (strain DSM 266 / SMG 266 / 2430) protein is Large ribosomal subunit protein bL33.